We begin with the raw amino-acid sequence, 419 residues long: Serine hydroxymethyltransferase (419 aa).

(6S)-5,6,7,8-tetrahydrofolate contacts are provided by residues L121 and 125–127 (GHL). An N6-(pyridoxal phosphate)lysine modification is found at K230. 355–357 (SPF) contacts (6S)-5,6,7,8-tetrahydrofolate.

The protein belongs to the SHMT family. As to quaternary structure, homodimer. Pyridoxal 5'-phosphate is required as a cofactor.

The protein resides in the cytoplasm. The catalysed reaction is (6R)-5,10-methylene-5,6,7,8-tetrahydrofolate + glycine + H2O = (6S)-5,6,7,8-tetrahydrofolate + L-serine. It participates in one-carbon metabolism; tetrahydrofolate interconversion. Its pathway is amino-acid biosynthesis; glycine biosynthesis; glycine from L-serine: step 1/1. Catalyzes the reversible interconversion of serine and glycine with tetrahydrofolate (THF) serving as the one-carbon carrier. This reaction serves as the major source of one-carbon groups required for the biosynthesis of purines, thymidylate, methionine, and other important biomolecules. Also exhibits THF-independent aldolase activity toward beta-hydroxyamino acids, producing glycine and aldehydes, via a retro-aldol mechanism. The polypeptide is Serine hydroxymethyltransferase (Streptococcus equi subsp. equi (strain 4047)).